Reading from the N-terminus, the 308-residue chain is Probable 5-dehydro-4-deoxyglucarate dehydratase (308 aa).

It belongs to the DapA family.

It catalyses the reaction 5-dehydro-4-deoxy-D-glucarate + H(+) = 2,5-dioxopentanoate + CO2 + H2O. The protein operates within carbohydrate acid metabolism; D-glucarate degradation; 2,5-dioxopentanoate from D-glucarate: step 2/2. The sequence is that of Probable 5-dehydro-4-deoxyglucarate dehydratase (ycbC) from Bacillus subtilis (strain 168).